The following is a 417-amino-acid chain: Multifunctional CCA protein (417 aa).

Residues Gly8 and Arg11 each contribute to the ATP site. CTP is bound by residues Gly8 and Arg11. Residues Asp21 and Asp23 each coordinate Mg(2+). 3 residues coordinate ATP: Arg91, Arg137, and Arg140. Residues Arg91, Arg137, and Arg140 each coordinate CTP. Positions 225–326 (SGIHTLMTLQ…LNVLKKTDAF (102 aa)) constitute an HD domain.

The protein belongs to the tRNA nucleotidyltransferase/poly(A) polymerase family. Bacterial CCA-adding enzyme type 1 subfamily. As to quaternary structure, monomer. Can also form homodimers and oligomers. It depends on Mg(2+) as a cofactor. The cofactor is Ni(2+).

The enzyme catalyses a tRNA precursor + 2 CTP + ATP = a tRNA with a 3' CCA end + 3 diphosphate. It carries out the reaction a tRNA with a 3' CCA end + 2 CTP + ATP = a tRNA with a 3' CCACCA end + 3 diphosphate. In terms of biological role, catalyzes the addition and repair of the essential 3'-terminal CCA sequence in tRNAs without using a nucleic acid template. Adds these three nucleotides in the order of C, C, and A to the tRNA nucleotide-73, using CTP and ATP as substrates and producing inorganic pyrophosphate. tRNA 3'-terminal CCA addition is required both for tRNA processing and repair. Also involved in tRNA surveillance by mediating tandem CCA addition to generate a CCACCA at the 3' terminus of unstable tRNAs. While stable tRNAs receive only 3'-terminal CCA, unstable tRNAs are marked with CCACCA and rapidly degraded. The sequence is that of Multifunctional CCA protein from Neisseria meningitidis serogroup B (strain ATCC BAA-335 / MC58).